Reading from the N-terminus, the 39-residue chain is Photosystem I reaction center subunit IX (39 aa).

The helical transmembrane segment at 4–24 threads the bilayer; it reads FLTTAPVVAAIWFTLTAGILI.

This sequence belongs to the PsaJ family.

The protein resides in the cellular thylakoid membrane. Functionally, may help in the organization of the PsaE and PsaF subunits. The polypeptide is Photosystem I reaction center subunit IX (Synechococcus sp. (strain CC9311)).